Here is a 1388-residue protein sequence, read N- to C-terminus: ESX-5 secretion system protein EccC5 (1388 aa).

The next 2 helical transmembrane spans lie at 38–58 (WLIV…AMVF) and 65–85 (FGGV…MMMF). FtsK domains lie at 477–679 (GELL…GAAQ), 855–1049 (QPPW…EDAK), and 1158–1351 (LQPV…DPDE). ATP-binding positions include 500 to 507 (GTTGSGKS), 873 to 880 (GAGGSGKT), and 1175 to 1182 (GRRECGRT).

In terms of assembly, part of the ESX-5 / type VII secretion system (T7SS), which is composed of cytosolic and membrane components. The ESX-5 membrane complex is composed of EccB5, EccC5, EccD5 and EccE5.

The protein localises to the cell inner membrane. In terms of biological role, part of the ESX-5 specialized secretion system, which is responsible for the secretion of EsxN and a number of PE_PGRS and PPE proteins. This component is essential for ESX-5 complex stability and secretion. The protein is ESX-5 secretion system protein EccC5 of Mycobacterium marinum (strain ATCC BAA-535 / M).